A 61-amino-acid polypeptide reads, in one-letter code: MDPNCSCPTGGSCSCAGSCTCKACRCPSCKKSCCSCCPVGCAKCAQGCVCKGASDKCSCCA.

Met-1 is subject to N-acetylmethionine. The interval Met-1 to Cys-29 is beta. Residues Cys-5, Cys-7, Cys-13, Cys-15, Cys-19, Cys-21, Cys-24, Cys-26, Cys-29, Cys-33, Cys-34, Cys-36, Cys-37, Cys-41, Cys-44, Cys-48, Cys-50, and Cys-57 each coordinate a divalent metal cation. Positions Lys-30 to Ala-61 are alpha. Ser-58 is subject to Phosphoserine. A divalent metal cation contacts are provided by Cys-59 and Cys-60.

Belongs to the metallothionein superfamily. Type 1 family. In terms of assembly, monomer.

Functionally, metallothioneins have a high content of cysteine residues that bind various heavy metals; these proteins are transcriptionally regulated by both heavy metals and glucocorticoids. This chain is Metallothionein-1A (MT1A), found in Bos taurus (Bovine).